Consider the following 379-residue polypeptide: Gonadotropin-releasing hormone II receptor (379 aa).

The Extracellular portion of the chain corresponds to 1–40; that stretch reads MSAGNGTPWGSAAGEESWAASGVAVEGSELPTFSAAAKVR. Residues 41–60 form a helical membrane-spanning segment; it reads VGVTIVLFVSSAGGNLAVLW. Residues 61 to 76 lie on the Cytoplasmic side of the membrane; sequence SVTRPQPSQLRPSPVR. The helical transmembrane segment at 77–96 threads the bilayer; it reads TLFAHLAAADLLVTFVVMPL. At 97–114 the chain is on the extracellular side; that stretch reads DATWNITVQWLAEDIACR. N-linked (GlcNAc...) asparagine glycosylation occurs at N101. C113 and C188 are joined by a disulfide. Residues 115–136 form a helical membrane-spanning segment; it reads TLMFLKLMAMYSAAFLPVVIGL. The Cytoplasmic portion of the chain corresponds to 137-160; the sequence is DRQAAVLNPLGSRSGVRKLLGAAW. The chain crosses the membrane as a helical span at residues 161 to 178; that stretch reads GLSFLLALPQLFLFHTVH. At 179-204 the chain is on the extracellular side; the sequence is RAGPVPFTQCVTKGSFKARWQETTYN. The chain crosses the membrane as a helical span at residues 205–224; it reads LFTFRCLFLLPLTAMAICYS. Residues 225-278 lie on the Cytoplasmic side of the membrane; it reads HIVLSVSSPQTRKGSHAPAGEFALCRSFDNCPRVRLWALRLALLILLTFILCWT. The chain crosses the membrane as a helical span at residues 279-297; the sequence is PYYLLGLWYWFSPTMLTEV. Residues 298–303 lie on the Extracellular side of the membrane; that stretch reads PPSLSH. Residues 304–323 form a helical membrane-spanning segment; that stretch reads ILFLFGLLNAPLDPLLYGAF. Topologically, residues 324 to 379 are cytoplasmic; that stretch reads TLGCQRGHQELSIDSSNEGSGRMLQQEIHALRQQEVQKTVTSRSAGETKDISITSI.

Belongs to the G-protein coupled receptor 1 family. In terms of processing, phosphorylated on the C-terminal cytoplasmic tail.

The protein resides in the cell membrane. In terms of biological role, receptor for gonadotropin releasing hormone II (GnRH II). This receptor mediates its action by association with G proteins that activate a phosphatidylinositol-calcium second messenger system. This is Gonadotropin-releasing hormone II receptor (GNRHR2) from Macaca mulatta (Rhesus macaque).